We begin with the raw amino-acid sequence, 304 residues long: MSQQRTLNNTIRATGVGLHSGNKIHITLRPAPVNHGIVFRRVDLDPVVEIPASGDLVTEVILCTGLTRNGAKVQTVEHLMSAFAGLGIDNAIVDLSSAELPIMDGSSAPFVFLLQSAGILEQNAAKRFIRIKRSVEVRQGDKVAKFSPYDGYKLGFTIEFDHPMIPHKQSYYEMEFSTAAYIKEISLARTFGFMHDLEDMRERNLGLGGSMDNAILLDDFRVLNEDGLRYGNEFVRHKILDAIGDLYLIGGPILGAYEAFKSGHALNNKLVRAVLADETSWEWISFPSPAAEQPPVVYTHPACI.

Histidine 78, histidine 237, and aspartate 241 together coordinate Zn(2+). Residue histidine 264 is the Proton donor of the active site.

This sequence belongs to the LpxC family. Requires Zn(2+) as cofactor.

It carries out the reaction a UDP-3-O-[(3R)-3-hydroxyacyl]-N-acetyl-alpha-D-glucosamine + H2O = a UDP-3-O-[(3R)-3-hydroxyacyl]-alpha-D-glucosamine + acetate. It functions in the pathway glycolipid biosynthesis; lipid IV(A) biosynthesis; lipid IV(A) from (3R)-3-hydroxytetradecanoyl-[acyl-carrier-protein] and UDP-N-acetyl-alpha-D-glucosamine: step 2/6. Functionally, catalyzes the hydrolysis of UDP-3-O-myristoyl-N-acetylglucosamine to form UDP-3-O-myristoylglucosamine and acetate, the committed step in lipid A biosynthesis. This is UDP-3-O-acyl-N-acetylglucosamine deacetylase from Xylella fastidiosa (strain Temecula1 / ATCC 700964).